Consider the following 53-residue polypeptide: Large ribosomal subunit protein bL32 (53 aa).

The tract at residues 1–27 is disordered; sequence MAVQQNKKSRSRRDMRRSHDALTTAAV. Residues 7-16 show a composition bias toward basic residues; that stretch reads KKSRSRRDMR.

The protein belongs to the bacterial ribosomal protein bL32 family.

The sequence is that of Large ribosomal subunit protein bL32 from Glaesserella parasuis serovar 5 (strain SH0165) (Haemophilus parasuis).